The primary structure comprises 170 residues: Xanthine-guanine phosphoribosyltransferase (170 aa).

5-phospho-alpha-D-ribose 1-diphosphate-binding positions include 41-42 (RG) and 98-106 (DDLTDTGKT). Asp99 contributes to the Mg(2+) binding site. A guanine-binding site is contributed by Asp102. Xanthine is bound at residue Asp102. A GMP-binding site is contributed by 102–106 (DTGKT).

This sequence belongs to the purine/pyrimidine phosphoribosyltransferase family. XGPT subfamily. In terms of assembly, homotetramer. Mg(2+) serves as cofactor.

The protein localises to the cell inner membrane. The catalysed reaction is GMP + diphosphate = guanine + 5-phospho-alpha-D-ribose 1-diphosphate. The enzyme catalyses XMP + diphosphate = xanthine + 5-phospho-alpha-D-ribose 1-diphosphate. It carries out the reaction IMP + diphosphate = hypoxanthine + 5-phospho-alpha-D-ribose 1-diphosphate. It functions in the pathway purine metabolism; GMP biosynthesis via salvage pathway; GMP from guanine: step 1/1. The protein operates within purine metabolism; XMP biosynthesis via salvage pathway; XMP from xanthine: step 1/1. Purine salvage pathway enzyme that catalyzes the transfer of the ribosyl-5-phosphate group from 5-phospho-alpha-D-ribose 1-diphosphate (PRPP) to the N9 position of the 6-oxopurines guanine and xanthine to form the corresponding ribonucleotides GMP (guanosine 5'-monophosphate) and XMP (xanthosine 5'-monophosphate), with the release of PPi. To a lesser extent, also acts on hypoxanthine. This Brucella abortus (strain 2308) protein is Xanthine-guanine phosphoribosyltransferase.